Consider the following 238-residue polypeptide: Zinc-finger homeodomain protein 11 (238 aa).

The ZF-HD dimerization-type; degenerate zinc finger occupies 12–59 (YRECMRNHAAKLGTYANDGCCEYTPDDGHPAGLLCAACGCHRNFHRKD). Positions 119–188 (RRRTRTKFTE…NHKAGGGGGG (70 aa)) form a DNA-binding region, homeobox. Positions 183–200 (GGGGGGGGSGGPGAGGGA) are enriched in gly residues. The tract at residues 183-238 (GGGGGGGGSGGPGAGGGAQTSSSTTRGGGDVGVGLSPAMGGDGEDDEEVRGSEMCM) is disordered.

Homo- and heterodimer with other ZFHD proteins.

Its subcellular location is the nucleus. Functionally, putative transcription factor. The protein is Zinc-finger homeodomain protein 11 (ZHD11) of Oryza sativa subsp. indica (Rice).